The chain runs to 240 residues: Purine nucleoside phosphorylase DeoD-type (240 aa).

Residue His5 participates in a purine D-ribonucleoside binding. Residues Gly21, Arg25, Arg44, and 88-91 (RVGS) each bind phosphate. Residues 181–183 (EME) and 205–206 (SD) each bind a purine D-ribonucleoside. The Proton donor role is filled by Asp206.

It belongs to the PNP/UDP phosphorylase family. Homohexamer; trimer of homodimers.

The enzyme catalyses a purine D-ribonucleoside + phosphate = a purine nucleobase + alpha-D-ribose 1-phosphate. The catalysed reaction is a purine 2'-deoxy-D-ribonucleoside + phosphate = a purine nucleobase + 2-deoxy-alpha-D-ribose 1-phosphate. Its function is as follows. Catalyzes the reversible phosphorolytic breakdown of the N-glycosidic bond in the beta-(deoxy)ribonucleoside molecules, with the formation of the corresponding free purine bases and pentose-1-phosphate. This chain is Purine nucleoside phosphorylase DeoD-type, found in Enterobacter sp. (strain 638).